We begin with the raw amino-acid sequence, 631 residues long: Squalene--hopene cyclase (631 aa).

PFTB repeat units follow at residues 15-56 (LDRA…LDRV), 61-102 (MEKI…KYIG), and 241-282 (EIRA…QHPA). Catalysis depends on D376, which acts as the Proton donor. PFTB repeat units lie at residues 400 to 441 (MTKG…GEVT), 468 to 508 (IRRA…KAVG), 516 to 557 (IQKA…SQTA), and 574 to 622 (ARRG…LALG).

This sequence belongs to the terpene cyclase/mutase family. Homodimer.

It localises to the cell membrane. It catalyses the reaction squalene = hop-22(29)-ene. The catalysed reaction is squalene + H2O = hopan-22-ol. Its pathway is secondary metabolite biosynthesis; hopanoid biosynthesis. In terms of biological role, catalyzes the cyclization of squalene to two pentacyclic triterpenes, hop-22(29)-ene and hopan-22-ol (diplopterol); hopene and hopanol are formed at a constant ratio of 5:1. Is a key enzyme of hopanoid biosynthesis; hopanoids are components of the bacterial cytoplasmic membranes that play a vital role in stabilizing the membranes. This is Squalene--hopene cyclase (shc) from Alicyclobacillus acidocaldarius subsp. acidocaldarius (strain ATCC 27009 / DSM 446 / BCRC 14685 / JCM 5260 / KCTC 1825 / NBRC 15652 / NCIMB 11725 / NRRL B-14509 / 104-IA) (Bacillus acidocaldarius).